We begin with the raw amino-acid sequence, 841 residues long: Potassium transport protein 1 (841 aa).

Transmembrane regions (helical) follow at residues 24–44 and 80–100; these read YIYI…GGTT and ILYG…ISFI. Asparagine 116 and asparagine 164 each carry an N-linked (GlcNAc...) asparagine glycan. The interval 173–192 is disordered; it reads STNNPYFPDNPPSPKADISK. Residues asparagine 215 and asparagine 401 are each glycosylated (N-linked (GlcNAc...) asparagine). 7 helical membrane passes run 469–489, 507–527, 537–557, 600–620, 662–682, 715–735, and 747–767; these read MVTL…IVFA, GWWA…SLIP, IFLL…FPCF, WVLF…FMVL, AVLV…AINM, LSYD…CEGG, and IFTV…STGL. Asparagine 771 carries an N-linked (GlcNAc...) asparagine glycan.

Belongs to the TrkH potassium transport family.

It is found in the cell membrane. In terms of biological role, together with TRK2, defines the major, high-affinity potassium influx transport system. Involved in maintenance of the proper sodium/potassium ratio in the cell and in regulating the plasma membrane potential. The sequence is that of Potassium transport protein 1 (trk1) from Schizosaccharomyces pombe (strain 972 / ATCC 24843) (Fission yeast).